We begin with the raw amino-acid sequence, 358 residues long: 4-hydroxybenzoate polyprenyltransferase, mitochondrial (358 aa).

A mitochondrion-targeting transit peptide spans methionine 1 to serine 20. 7 consecutive transmembrane segments (helical) span residues threonine 76–tyrosine 96, leucine 107–leucine 127, alanine 154–proline 174, valine 202–glutamate 222, valine 229–alanine 249, valine 275–glycine 295, and asparagine 336–tyrosine 356.

It belongs to the UbiA prenyltransferase family. It depends on Mg(2+) as a cofactor.

The protein localises to the mitochondrion. Its subcellular location is the mitochondrion inner membrane. The enzyme catalyses an all-trans-polyprenyl diphosphate + 4-hydroxybenzoate = a 4-hydroxy-3-(all-trans-polyprenyl)benzoate + diphosphate. The protein operates within cofactor biosynthesis; ubiquinone biosynthesis. In terms of biological role, catalyzes the prenylation of para-hydroxybenzoate (PHB) with an all-trans polyprenyl group. Mediates the second step in the final reaction sequence of coenzyme Q (CoQ) biosynthesis, which is the condensation of the polyisoprenoid side chain with PHB, generating the first membrane-bound Q intermediate. This Schizosaccharomyces pombe (strain 972 / ATCC 24843) (Fission yeast) protein is 4-hydroxybenzoate polyprenyltransferase, mitochondrial.